Here is a 1697-residue protein sequence, read N- to C-terminus: Phosphatidylinositol 3-kinase 3 (1697 aa).

6 disordered regions span residues 57 to 91 (RSIN…TQPC), 169 to 229 (INNN…DSSI), 244 to 279 (KTTE…ENEI), 310 to 376 (KKNN…NSVG), 398 to 428 (SWTS…SGSS), and 440 to 504 (DLLK…NNDE). 3 stretches are compositionally biased toward low complexity: residues 60 to 87 (NNNN…NNNN), 170 to 196 (NNNN…NNNN), and 212 to 222 (NNNSNNNNNIN). 2 stretches are compositionally biased toward low complexity: residues 312-374 (NNNN…TTNS) and 398-408 (SWTSSKPTSSS). Polar residues-rich tracts occupy residues 409 to 428 (IGFA…SGSS) and 444 to 456 (SPSS…SDIF). Over residues 457 to 503 (NENNNNNNNNNNNNNNNNNNNNNNNNNNNNNNNNEELINNNNNNNND) the composition is skewed to low complexity. The PI3K-RBD domain maps to 737–823 (PEFFVIRVHL…KGEIDLTMVE (87 aa)). The region spanning 888-1036 (VTENLQVRLL…QAIIIAFEFK (149 aa)) is the C2 PI3K-type domain. A PIK helical domain is found at 1060-1238 (GNELPVVTME…RVLSSGFLRY (179 aa)). Positions 1304–1581 (IPEKCKSMDS…LIHESIGTLT (278 aa)) constitute a PI3K/PI4K catalytic domain. A G-loop region spans residues 1310-1316 (SMDSAKV). The catalytic loop stretch occupies residues 1447–1455 (GIGDRHNDN). Residues 1466–1492 (HIDFGHFLGNFKTFAGFQREKAPFVLT) form an activation loop region. Low complexity predominate over residues 1609-1625 (ASSLNLNKNKPSSQSKL). A disordered region spans residues 1609–1697 (ASSLNLNKNK…DTEKENSIDK (89 aa)). 5 consecutive repeat copies span residues 1622–1626 (QSKLD), 1627–1631 (LSRSD), 1632–1636 (LSRSD), 1642–1646 (SSRLD), and 1647–1651 (LSRSD). The segment at 1622-1651 (QSKLDLSRSDLSRSDSSRSDSSRLDLSRSD) is 5 X 5 AA approximate repeats. Basic and acidic residues-rich tracts occupy residues 1626–1681 (DLSR…DKDN) and 1688–1697 (DTEKENSIDK). Residues 1659-1672 (KEKEKEKEKEKEKE) form a 7 X 2 AA tandem repeats of K-E region.

It belongs to the PI3/PI4-kinase family.

The catalysed reaction is a 1,2-diacyl-sn-glycero-3-phospho-(1D-myo-inositol) + ATP = a 1,2-diacyl-sn-glycero-3-phospho-(1D-myo-inositol-3-phosphate) + ADP + H(+). This chain is Phosphatidylinositol 3-kinase 3 (pikC), found in Dictyostelium discoideum (Social amoeba).